We begin with the raw amino-acid sequence, 1006 residues long: MIQNGGNSYVDSNMNETQNDTTDNFDAEMQDLNGYISEIVDEARNVSEVDAKFLGDTSALQAEGLWSDEESDYEGSDDESNFSKTASRTEDDIANEEWEENLKAVAGFRKVRKGHKGRGRVSRADMLPSVEVQQMLSLANHLFAQEGNFDEAQKLAEEIVRIDNNVIAAWKMLGECHRQRGNGRVNIEKCLIAWMAAAHLKPKDHELWFTCAKLSESLEFWDQADYCYNRAVSAKPPNKSELKKYIWNRSVLNKEHGSLKKAAEGFKFLLQSSPYNASILKNLAEIYIKIHAPREILKQFEIAWKYFYQYPAPPIGNDIFDLPTLNLYAELLLLDHQWSNLIRLINRGVRWFRGRKSESFWDEFDDDREWDVDERRREFPNASEEHTNKEAYLLPHLFRTKLGIARLKTGELPEAELHFSVIKNLPPDYAWGMLYDIAKAYMDIERLDLALEYFVLICNHEPAQNIGLWYNMGVCYLELKEYEHAQQCMEAILIVDNSNTNALIKLAEINELQDNRDAALEIVTNIFEQRRNINELEREQSQNEDHEKNVGSQLFVGNQKVPQDKWEKRARISRSKEEARQFTIWKTEETQRRFHKLDILRQSLKKEENVSESLNEWLAIASELIDEFVSIKAFFPSEKKARARAGLLTRRTRYASLNDQLTSMINRLNDSLTRTKYGDLDLDTILRTGYFRNVSIDAWYQLFVEFSLRLTKVGSVQQAYDVLTTAMGAILFDQDTIKRQNLRWCMLACSMYARDPQGALTPLRWVFTTFQFRQDTYRLFSAVLSQGYECSRAFVDSANQKFLLRLIKLMDQLMSNSLVSGAATLVKNDDGLATVPTSYDPVLVLLYGHIMARNRSWIPAINYYSRAFAINPDCPITNLSLGLAYLHRAMQRLSDNRHYQILQGFTFLYRYYDLRVNEGLGEKQEALYNLGKAYHFIGLEHYAVKYYEAVLGLSPMSQGDKMTSSESTVSTTYDFGFEAAYNLRLIYICSGNIKLAFQISSKYLIF.

The disordered stretch occupies residues 64-91; sequence GLWSDEESDYEGSDDESNFSKTASRTED. The segment covering 66 to 80 has biased composition (acidic residues); the sequence is WSDEESDYEGSDDES. 6 TPR repeats span residues 133–166, 205–238, 277–310, 396–429, 431–464, and 466–499; these read QQMLSLANHLFAQEGNFDEAQKLAEEIVRIDNNV, HELWFTCAKLSESLEFWDQADYCYNRAVSAKPPN, ASILKNLAEIYIKIHAPREILKQFEIAWKYFYQY, HLFRTKLGIARLKTGELPEAELHFSVIKNLPPDY, WGMLYDIAKAYMDIERLDLALEYFVLICNHEPAQ, and IGLWYNMGVCYLELKEYEHAQQCMEAILIVDNSN. Residues 506 to 554 are a coiled coil; it reads LAEINELQDNRDAALEIVTNIFEQRRNINELEREQSQNEDHEKNVGSQL. 2 TPR repeats span residues 841 to 874 and 924 to 957; these read PVLVLLYGHIMARNRSWIPAINYYSRAFAINPDC and QEALYNLGKAYHFIGLEHYAVKYYEAVLGLSPMS.

Component of the TFIIIC complex including sfc1, sfc3, sfc4, sfc6 and sfc7. The subunits are organized in two globular domains, tauA and tauB, connected by a proteolysis-sensitive and flexible linker. Interacts with sfc1, sfc3 and sfc6. In terms of processing, phosphorylated.

The protein resides in the nucleus. TFIIIC mediates tRNA and 5S RNA gene activation by binding to intragenic promoter elements. Upstream of the transcription start site, TFIIIC assembles the initiation complex TFIIIB-TFIIIC-tDNA, which is sufficient for RNA polymerase III recruitment and function. Part of the tauA domain of TFIIIC that binds boxA DNA promoter sites of tRNA and similar genes. Sfc4 is the TFIIIB assembling subunit of TFIIIC. This Schizosaccharomyces pombe (strain 972 / ATCC 24843) (Fission yeast) protein is Transcription factor tau subunit sfc4.